The primary structure comprises 449 residues: Putative F-box/LRR-repeat protein At3g44090 (449 aa).

The F-box domain occupies 23 to 77; the sequence is LASMDCLPDDLLVQILYFLPTKEAISTSLLSKRWRTLYSLVHNLDLDDYIFWHHE. LRR repeat units follow at residues 133–163, 186–212, 214–231, 247–278, 286–311, and 320–345; these read YYNL…SLGT, YIWF…TIHH, FRPF…SVTI, TPNV…ELDL, RQVQ…HLTY, and SKKR…VLSG.

The chain is Putative F-box/LRR-repeat protein At3g44090 from Arabidopsis thaliana (Mouse-ear cress).